The chain runs to 90 residues: Small ribosomal subunit protein uS15c (90 aa).

The protein belongs to the universal ribosomal protein uS15 family. As to quaternary structure, part of the 30S ribosomal subunit.

The protein localises to the plastid. The protein resides in the chloroplast. This Lolium perenne (Perennial ryegrass) protein is Small ribosomal subunit protein uS15c (rps15-A).